Reading from the N-terminus, the 101-residue chain is Interleukin-8 (101 aa).

Residues 1–22 form the signal peptide; the sequence is MTSKLVVALLAAFMLSAALCEA. The residue at position 27 (R27) is a Citrulline. Intrachain disulfides connect C34–C61 and C36–C77.

It belongs to the intercrine alpha (chemokine CxC) family. In terms of assembly, homodimer. Interacts with TNFAIP6 (via Link domain); this interaction interferes with chemokine binding to glycosaminoglycans. Citrullination at Arg-27 prevents proteolysis, and dampens tissue inflammation, it also enhances leukocytosis, possibly through impaired chemokine clearance from the blood circulation.

The protein resides in the secreted. Its function is as follows. Chemotactic factor that mediates inflammatory response by attracting neutrophils, basophils, and T-cells to clear pathogens and protect the host from infection. Also plays an important role in neutrophil activation. Released in response to an inflammatory stimulus, exerts its effect by binding to the G-protein-coupled receptors CXCR1 and CXCR2, primarily found in neutrophils, monocytes and endothelial cells. G-protein heterotrimer (alpha, beta, gamma subunits) constitutively binds to CXCR1/CXCR2 receptor and activation by IL8 leads to beta and gamma subunits release from Galpha (GNAI2 in neutrophils) and activation of several downstream signaling pathways including PI3K and MAPK pathways. The polypeptide is Interleukin-8 (CXCL8) (Felis catus (Cat)).